The chain runs to 188 residues: Elongation factor P-like protein (188 aa).

The protein belongs to the elongation factor P family.

This Xanthomonas euvesicatoria pv. vesicatoria (strain 85-10) (Xanthomonas campestris pv. vesicatoria) protein is Elongation factor P-like protein.